The primary structure comprises 590 residues: MSNLGNNITERIESDCISQNECRIDVYFSEKEKESTEASINMFLAELERLQLEYGKEHIWQNEELNLQRVEYQGKDCILGITNFGDCIDDEWYIVWLLREASKAVKSAFVRIIDEDGEFLLIEAALSLPKWIDEDNSDYRVWIHNGEVIILRPEDEFLKKMNRCPPLTREQAIFQISSGSNLYTSREVNDSISQRLKKFPKAANVKLRAICTVPRKIVHVLQKNKNLISSAVNAFYYRDPIDENYCDRMSKFNQNDLVTTTITFTPLLYAQLYQQRCKTFRPFHLPSDVHSLDYERAILGMKLSCGFEILYNSKENVEKRTEIDEYLQIQPLPTDEDIKKIPLIEDDTSFMNVNPDELEELLEKKLNSFCDDFGDDERSGFDNTDHDNTLVGEEEMVPGNHGGKSINEEITKNKQKQNFNESDLKNMASRIETFINDEASNNHREDFYGVKNSDTDTDSDSLADSDDEIFLNRNQGIDEVEFDETKFYDLLKGKDGKYQNQDVDEFSSGNEDEMDIPGDANMEEYMRAMDEELYGGLRGRDEGLEGIDDKDIDLNLMKNIIEGIEANPDLYGGPISTLLNSLKIQIPREK.

The tract at residues 445-464 (EDFYGVKNSDTDTDSDSLAD) is disordered. Positions 455-464 (TDTDSDSLAD) are enriched in acidic residues.

This sequence belongs to the ECD family.

It localises to the cytoplasm. Its subcellular location is the nucleus. Involved in the regulation of carbohydrate metabolism. May act as a transcription factor. The chain is Protein ecdysoneless homolog from Schizosaccharomyces pombe (strain 972 / ATCC 24843) (Fission yeast).